Here is a 547-residue protein sequence, read N- to C-terminus: Undecaprenyl phosphate-alpha-4-amino-4-deoxy-L-arabinose arabinosyl transferase (547 aa).

Helical transmembrane passes span 1–21, 83–103, 111–131, 174–194, 205–225, 253–273, 286–306, 311–331, 346–366, 378–398, and 408–428; these read MKLTKWALPLFFLLFYLLPLD, FASAAATGLSALLIVWFALQL, FLAGLIYLSLLIVYGIGTYSV, FLTKGFIALAVPVIVIVPYVI, FGPLAMVSAALLAAPWAIAVH, APFWYYLPMGLLGTLPWLGLL, ISPETLYLLAWVVLPLLFFSV, LLTYILPCFAPLAMLLAASAV, AWLNGLFGLICLAVLAVLALS, GALAVAMVIFAGWALLGFIQL, and SALCPMVLAVGLPWALPQSLI.

The protein belongs to the glycosyltransferase 83 family.

It is found in the cell inner membrane. The catalysed reaction is 4-amino-4-deoxy-alpha-L-arabinopyranosyl di-trans,octa-cis-undecaprenyl phosphate + lipid IVA = lipid IIA + di-trans,octa-cis-undecaprenyl phosphate.. It participates in lipopolysaccharide metabolism; 4-amino-4-deoxy-beta-L-arabinose-lipid A biosynthesis. Catalyzes the transfer of the L-Ara4N moiety of the glycolipid undecaprenyl phosphate-alpha-L-Ara4N to lipid A. The modified arabinose is attached to lipid A and is required for resistance to polymyxin and cationic antimicrobial peptides. The polypeptide is Undecaprenyl phosphate-alpha-4-amino-4-deoxy-L-arabinose arabinosyl transferase (Aeromonas salmonicida (strain A449)).